We begin with the raw amino-acid sequence, 224 residues long: UPF0758 protein mma_2551 (224 aa).

The MPN domain maps to 102–224 (SLNSPQAVKK…VYSFAEHGHL (123 aa)). Zn(2+) is bound by residues H173, H175, and D186. A JAMM motif motif is present at residues 173-186 (HNHPSGSSEPSAAD).

The protein belongs to the UPF0758 family.

The polypeptide is UPF0758 protein mma_2551 (Janthinobacterium sp. (strain Marseille) (Minibacterium massiliensis)).